We begin with the raw amino-acid sequence, 73 residues long: Ocellatin-PT7 (73 aa).

The signal sequence occupies residues 1-22 (MAFLKKSLFLVLFLGLVSLSIC). Positions 23–39 (DEEKRQDEDDDDDDDEE) are excised as a propeptide.

As to expression, expressed by the skin glands.

The protein localises to the secreted. In terms of biological role, has antibacterial activity against Gram-negative bacteria E.coli ATCC 25922 (MIC=60 uM) and S.choleraesuis ATCC 14028 (MIC=240 uM) and against Gram-positive bacterium S.aureus ATCC 29313 (MIC=240 uM). Shows no hemolytic activity and no cytotoxicity. The polypeptide is Ocellatin-PT7 (Leptodactylus pustulatus (Ceara white-lipped frog)).